Consider the following 147-residue polypeptide: 3-hydroxyacyl-[acyl-carrier-protein] dehydratase FabZ (147 aa).

His53 is a catalytic residue.

The protein belongs to the thioester dehydratase family. FabZ subfamily.

The protein localises to the cytoplasm. It catalyses the reaction a (3R)-hydroxyacyl-[ACP] = a (2E)-enoyl-[ACP] + H2O. Involved in unsaturated fatty acids biosynthesis. Catalyzes the dehydration of short chain beta-hydroxyacyl-ACPs and long chain saturated and unsaturated beta-hydroxyacyl-ACPs. The polypeptide is 3-hydroxyacyl-[acyl-carrier-protein] dehydratase FabZ (Synechococcus sp. (strain WH7803)).